The primary structure comprises 566 residues: E3 ubiquitin-protein ligase Rnf220 (566 aa).

Residue K277 forms a Glycyl lysine isopeptide (Lys-Gly) (interchain with G-Cter in SUMO2) linkage. Residues 277 to 300 (KREGDSPTASPHSSATEDLHHSDR) form a disordered region. A compositionally biased stretch (basic and acidic residues) spans 291-300 (ATEDLHHSDR). S390 is modified (phosphoserine). Positions 485–513 (EESAVTTFEALKARVRELERQLSRGDRYK) form a coiled coil. The tract at residues 514 to 522 (CLICMDSYS) is required for targeting to the cytoplasm. Residues 514 to 553 (CLICMDSYSMPLTSIQCWHVHCEECWLRTLGAKKLCPQCN) form an RING-type zinc finger.

Interacts with SIN3B. Interacts with CTNNB1 (via Armadillo repeats 2-8). Interacts with USP7 (via MATH domain). Auto-ubiquitinated; leads to proteasomal degradation. In the brain, expressed in the hippocampus, telenecephalon and cerebellum. No expression in astro glial cells or in neural progenitor cells.

Its subcellular location is the cytoplasm. It is found in the nucleus. It catalyses the reaction S-ubiquitinyl-[E2 ubiquitin-conjugating enzyme]-L-cysteine + [acceptor protein]-L-lysine = [E2 ubiquitin-conjugating enzyme]-L-cysteine + N(6)-ubiquitinyl-[acceptor protein]-L-lysine.. The protein operates within protein modification; protein ubiquitination. E3 ubiquitin-protein ligase that promotes the ubiquitination and proteasomal degradation of SIN3B. Independently of its E3 ligase activity, acts as a CTNNB1 stabilizer through USP7-mediated deubiquitination of CTNNB1 and promotes Wnt signaling. Plays a critical role in the regulation of nuclear lamina. The polypeptide is E3 ubiquitin-protein ligase Rnf220 (Rnf220) (Mus musculus (Mouse)).